Here is a 129-residue protein sequence, read N- to C-terminus: Integration host factor subunit alpha (129 aa).

A disordered region spans residues 87-129 (SALNGEAPPEDHAEIDAREEAAADAAEARGEDFDEEGMEDMEG). Positions 95 to 117 (PEDHAEIDAREEAAADAAEARGE) are enriched in basic and acidic residues. A compositionally biased stretch (acidic residues) spans 118 to 129 (DFDEEGMEDMEG).

Belongs to the bacterial histone-like protein family. As to quaternary structure, heterodimer of an alpha and a beta chain.

Functionally, this protein is one of the two subunits of integration host factor, a specific DNA-binding protein that functions in genetic recombination as well as in transcriptional and translational control. It is necessary for normal cell growth and the production of carotenoids in response to light. The chain is Integration host factor subunit alpha (ihfA) from Myxococcus xanthus.